The primary structure comprises 95 residues: DNA-directed RNA polymerase subunit Rpo11 (95 aa).

Belongs to the archaeal Rpo11/eukaryotic RPB11/RPC19 RNA polymerase subunit family. As to quaternary structure, part of the RNA polymerase complex.

It is found in the cytoplasm. It catalyses the reaction RNA(n) + a ribonucleoside 5'-triphosphate = RNA(n+1) + diphosphate. Its function is as follows. DNA-dependent RNA polymerase (RNAP) catalyzes the transcription of DNA into RNA using the four ribonucleoside triphosphates as substrates. The chain is DNA-directed RNA polymerase subunit Rpo11 from Methanococcus vannielii (strain ATCC 35089 / DSM 1224 / JCM 13029 / OCM 148 / SB).